The chain runs to 628 residues: DNA ligase (628 aa).

NAD(+) is bound by residues 36–40 (DVEYD), 85–86 (SL), and Glu-117. Lys-119 serves as the catalytic N6-AMP-lysine intermediate. NAD(+)-binding residues include Arg-140, Glu-174, Lys-309, and Lys-333. Zn(2+) is bound by residues Cys-427, Cys-430, Cys-446, and Cys-452.

It belongs to the NAD-dependent DNA ligase family. LigA subfamily. Mg(2+) is required as a cofactor. Requires Mn(2+) as cofactor.

The catalysed reaction is NAD(+) + (deoxyribonucleotide)n-3'-hydroxyl + 5'-phospho-(deoxyribonucleotide)m = (deoxyribonucleotide)n+m + AMP + beta-nicotinamide D-nucleotide.. In terms of biological role, DNA ligase that catalyzes the formation of phosphodiester linkages between 5'-phosphoryl and 3'-hydroxyl groups in double-stranded DNA using NAD as a coenzyme and as the energy source for the reaction. It is essential for DNA replication and repair of damaged DNA. This Tropheryma whipplei (strain TW08/27) (Whipple's bacillus) protein is DNA ligase.